Reading from the N-terminus, the 198-residue chain is Recombination protein RecR (198 aa).

The C4-type zinc finger occupies 56–71; it reads CKICHSLTENEICDIC. The 96-residue stretch at 79–174 folds into the Toprim domain; the sequence is HLLCVVESPA…HMTRIAQGVP (96 aa).

Belongs to the RecR family.

Its function is as follows. May play a role in DNA repair. It seems to be involved in an RecBC-independent recombinational process of DNA repair. It may act with RecF and RecO. The chain is Recombination protein RecR from Acinetobacter baylyi (strain ATCC 33305 / BD413 / ADP1).